The primary structure comprises 437 residues: ATP-dependent protease ATPase subunit HslU (437 aa).

Residues valine 18, 60-65 (GCGKTE), aspartate 250, glutamate 315, and arginine 387 contribute to the ATP site.

This sequence belongs to the ClpX chaperone family. HslU subfamily. A double ring-shaped homohexamer of HslV is capped on each side by a ring-shaped HslU homohexamer. The assembly of the HslU/HslV complex is dependent on binding of ATP.

It localises to the cytoplasm. In terms of biological role, ATPase subunit of a proteasome-like degradation complex; this subunit has chaperone activity. The binding of ATP and its subsequent hydrolysis by HslU are essential for unfolding of protein substrates subsequently hydrolyzed by HslV. HslU recognizes the N-terminal part of its protein substrates and unfolds these before they are guided to HslV for hydrolysis. This chain is ATP-dependent protease ATPase subunit HslU, found in Methylobacterium nodulans (strain LMG 21967 / CNCM I-2342 / ORS 2060).